Here is a 262-residue protein sequence, read N- to C-terminus: Acyl-[acyl-carrier-protein]--UDP-N-acetylglucosamine O-acyltransferase (262 aa).

This sequence belongs to the transferase hexapeptide repeat family. LpxA subfamily. In terms of assembly, homotrimer.

The protein localises to the cytoplasm. The enzyme catalyses a (3R)-hydroxyacyl-[ACP] + UDP-N-acetyl-alpha-D-glucosamine = a UDP-3-O-[(3R)-3-hydroxyacyl]-N-acetyl-alpha-D-glucosamine + holo-[ACP]. The protein operates within glycolipid biosynthesis; lipid IV(A) biosynthesis; lipid IV(A) from (3R)-3-hydroxytetradecanoyl-[acyl-carrier-protein] and UDP-N-acetyl-alpha-D-glucosamine: step 1/6. Its function is as follows. Involved in the biosynthesis of lipid A, a phosphorylated glycolipid that anchors the lipopolysaccharide to the outer membrane of the cell. This chain is Acyl-[acyl-carrier-protein]--UDP-N-acetylglucosamine O-acyltransferase, found in Salmonella typhi.